The following is a 227-amino-acid chain: Ribosomal RNA small subunit methyltransferase G (227 aa).

Residues glycine 74, leucine 79, 124 to 125 (AE), and arginine 142 each bind S-adenosyl-L-methionine.

The protein belongs to the methyltransferase superfamily. RNA methyltransferase RsmG family.

The protein localises to the cytoplasm. In terms of biological role, specifically methylates the N7 position of guanine in position 518 of 16S rRNA. The polypeptide is Ribosomal RNA small subunit methyltransferase G (Mycolicibacterium gilvum (strain PYR-GCK) (Mycobacterium gilvum (strain PYR-GCK))).